The primary structure comprises 471 residues: FAD-dependent monooxygenase andE (471 aa).

FAD-binding residues include Glu-35, Gly-49, and Arg-108. Tyr-216 is an active-site residue. Positions 308 and 321 each coordinate FAD. The next 2 helical transmembrane spans lie at Leu-403–Pro-423 and Thr-443–Leu-463.

Belongs to the paxM FAD-dependent monooxygenase family. FAD is required as a cofactor.

It is found in the membrane. It participates in secondary metabolite biosynthesis; terpenoid biosynthesis. In terms of biological role, FAD-dependent monooxygenase; part of the gene cluster that mediates the biosynthesis of anditomin, a fungal meroterpenoid. The first step of the pathway is the synthesis of 3,5-dimethylorsellinic acid (DMOA) by the polyketide synthase andM. DMOA is then converted to the phthalide compound 5,7-dihydroxy-4,6-dimethylphthalide (DHDMP) by the cytochrome P450 monooxygenase andK, which is further prenylated by the prenyltransferase andD to yield farnesyl-DHDMP. Further epoxidation by the FAD-dependent monooxygenase andE leads to epoxyfarnesyl-DHDMP. The next step involves the terpene cyclase andB that converts epoxyfarnesyl-DHDMP into preandiloid A through opening of the epoxide ring followed by the cyclization of the farnesyl moiety. Preandiloid A is in turn oxidized at the C-3 hydroxyl group to yield preandiloid B by the dehydrogenase andC. The dioxygenase andA is solely responsible for the dehydrogenation of preandiloid B leading to the enone preandiloid C, as well as for the intriguing structural rearrangement to generate the bicyclo[2.2.2]octane core, transforming preandiloid C into andiconin. FAD-binding monooxygenase andJ then produces andilesin D which is reduced by dehydrogenase andI to yield andilesin A. Action of acetyltransferase andG followed by a spontaneous acetate elimination leads then to andilesin B, which is in turn substrate of the short chain dehydrogenase andH to yield andilesin C. Finally, the dioxygenase andF catalyzes the transformation of andilesin C to anditomin. This chain is FAD-dependent monooxygenase andE, found in Emericella variicolor (Aspergillus stellatus).